The following is a 666-amino-acid chain: Adenylylsulfate reductase subunit alpha (666 aa).

Residues 32–35 (GGMG), 60–61 (DK), 67–69 (SGA), N78, I193, S259, S417, 461–462 (AD), and S472 contribute to the FAD site.

This sequence belongs to the FAD-dependent oxidoreductase 2 family. As to quaternary structure, heterodimer composed of AprA and AprB. The heterodimers can dimerize to form heterotetramers. FAD is required as a cofactor.

Its subcellular location is the cytoplasm. It catalyses the reaction sulfite + A + AMP + 2 H(+) = adenosine 5'-phosphosulfate + AH2. Functionally, catalytic subunit of the adenylylsulfate reductase which catalyzes reversibly the reduction of adenosine 5'-phosphosulfate (APS) to sulfite and AMP during dissimilatory sulfate reduction. The chain is Adenylylsulfate reductase subunit alpha from Megalodesulfovibrio gigas (strain ATCC 19364 / DSM 1382 / NCIMB 9332 / VKM B-1759) (Desulfovibrio gigas).